Here is a 270-residue protein sequence, read N- to C-terminus: Glutamate 5-kinase (270 aa).

An ATP-binding site is contributed by lysine 17. Substrate is bound by residues serine 57, aspartate 144, and asparagine 160. ATP is bound by residues 180 to 181 (SD) and 222 to 228 (TGGMTSK).

This sequence belongs to the glutamate 5-kinase family.

It is found in the cytoplasm. It carries out the reaction L-glutamate + ATP = L-glutamyl 5-phosphate + ADP. Its pathway is amino-acid biosynthesis; L-proline biosynthesis; L-glutamate 5-semialdehyde from L-glutamate: step 1/2. Its function is as follows. Catalyzes the transfer of a phosphate group to glutamate to form L-glutamate 5-phosphate. This chain is Glutamate 5-kinase, found in Lactococcus lactis subsp. lactis (strain IL1403) (Streptococcus lactis).